The following is a 109-amino-acid chain: Globin (109 aa).

The Globin domain maps to proline 3 to leucine 109.

The protein belongs to the globin family. Monomer.

Oxygen binding protein. In Dicrocoelium dendriticum (Small liver fluke), this protein is Globin.